Reading from the N-terminus, the 444-residue chain is Tol-Pal system protein TolB (444 aa).

An N-terminal signal peptide occupies residues 1-26; sequence MTLFRTLAPMGLALALLLPAAVPAAA. A compositionally biased stretch (polar residues) spans 281 to 310; sequence IYTLDTGSGTRRQLTNSPSIETAPSYSPDG. Residues 281-311 are disordered; sequence IYTLDTGSGTRRQLTNSPSIETAPSYSPDGS.

The protein belongs to the TolB family. In terms of assembly, the Tol-Pal system is composed of five core proteins: the inner membrane proteins TolA, TolQ and TolR, the periplasmic protein TolB and the outer membrane protein Pal. They form a network linking the inner and outer membranes and the peptidoglycan layer.

It localises to the periplasm. Its function is as follows. Part of the Tol-Pal system, which plays a role in outer membrane invagination during cell division and is important for maintaining outer membrane integrity. The chain is Tol-Pal system protein TolB from Cereibacter sphaeroides (strain ATCC 17029 / ATH 2.4.9) (Rhodobacter sphaeroides).